Consider the following 1202-residue polypeptide: Protein jagged-2 (1202 aa).

At 1 to 1037 (GACCDGDGRT…ETVVMGGSST (1037 aa)) the chain is on the extracellular side. Asn-107 carries N-linked (GlcNAc...) asparagine glycosylation. In terms of domain architecture, DSL spans 150–194 (VRCDENYYSATCNKFCRPRNDFFGHYTCDQYGNKACMDGWMGKEC). Cystine bridges form between Cys-152-Cys-161, Cys-165-Cys-177, Cys-185-Cys-194, Cys-199-Cys-210, Cys-203-Cys-216, Cys-218-Cys-227, Cys-230-Cys-241, Cys-236-Cys-247, Cys-249-Cys-258, Cys-265-Cys-277, Cys-271-Cys-287, Cys-289-Cys-298, Cys-305-Cys-316, Cys-310-Cys-325, Cys-327-Cys-336, Cys-343-Cys-354, Cys-348-Cys-363, Cys-365-Cys-374, Cys-381-Cys-392, Cys-386-Cys-401, Cys-403-Cys-412, Cys-419-Cys-429, Cys-423-Cys-438, Cys-440-Cys-449, Cys-456-Cys-467, Cys-461-Cys-476, Cys-478-Cys-487, Cys-495-Cys-506, Cys-500-Cys-515, Cys-517-Cys-526, Cys-544-Cys-567, Cys-561-Cys-577, Cys-579-Cys-588, Cys-595-Cys-606, Cys-600-Cys-615, Cys-617-Cys-626, Cys-633-Cys-644, Cys-638-Cys-653, Cys-655-Cys-664, Cys-671-Cys-682, Cys-676-Cys-691, and Cys-693-Cys-702. The EGF-like 1 domain occupies 195 to 228 (KEAVCKQGCNLLHGGCTVPGECRCSYGWQGKFCD). The region spanning 229–259 (ECVPYPGCVHGSCVEPWHCDCETNWGGLLCD) is the EGF-like 2; atypical domain. 2 EGF-like domains span residues 261-299 (DLNY…KNCE) and 301-337 (AEHA…PTCA). The EGF-like 5; calcium-binding domain occupies 339 to 375 (DIDECASNPCAAGGTCVDQVDGFECICPEQWVGATCQ). The region spanning 377–413 (DANECEGKPCLNAFSCKNLIGGYYCDCLPGWKGANCH) is the EGF-like 6; calcium-binding domain. Residues 415-450 (NINDCHGQCQHGGTCKDLVNGYQCVCPRGFGGRHCE) enclose the EGF-like 7; calcium-binding domain. 2 consecutive EGF-like domains span residues 452–488 (EYYK…PLCE) and 490–527 (DVDL…KNCS). N-linked (GlcNAc...) asparagine glycosylation occurs at Asn-525. The EGF-like 10; atypical domain maps to 529–589 (PRETCPGGAC…DSGFTGTYCH (61 aa)). A glycan (N-linked (GlcNAc...) asparagine) is linked at Asn-574. Residues 591 to 627 (NIDDCMGQPCRNGGTCIDEVDSFACFCPSGWEGELCD) enclose the EGF-like 11; calcium-binding domain. An EGF-like 12; calcium-binding domain is found at 629–665 (NPNDCLPDPCHSRGRCYDLVNDFYCVCDDGWKDKTCH). 2 consecutive EGF-like domains span residues 667 to 703 (REFQ…STCT) and 706 to 742 (KNSS…RTCT). N-linked (GlcNAc...) asparagine glycosylation occurs at Asn-707. 9 cysteine pairs are disulfide-bonded: Cys-710/Cys-721, Cys-715/Cys-730, Cys-732/Cys-741, Cys-748/Cys-759, Cys-753/Cys-768, Cys-770/Cys-779, Cys-786/Cys-797, Cys-791/Cys-806, and Cys-808/Cys-817. The EGF-like 15; calcium-binding domain maps to 744–780 (NTNDCNPLPCYNGGICVDGVNWFRCECAPGFAGPDCR). The region spanning 782 to 818 (NIDECQSSPCAYGATCVDEINGYRCSCPPGRSGPRCQ) is the EGF-like 16; calcium-binding domain. A glycan (N-linked (GlcNAc...) asparagine) is linked at Asn-1015. A helical membrane pass occupies residues 1038–1058 (GLLVPVLCSVFSVLWLACMVI). The Cytoplasmic segment spans residues 1059–1202 (CVWWTRKRRK…TKDVRCAGRE (144 aa)). Composition is skewed to basic and acidic residues over residues 1070–1080 (RERSRLPRDES), 1147–1159 (LSRG…RSRE), and 1185–1202 (VDNR…AGRE). The disordered stretch occupies residues 1070–1202 (RERSRLPRDE…TKDVRCAGRE (133 aa)). The residue at position 1080 (Ser-1080) is a Phosphoserine.

The protein localises to the membrane. In terms of biological role, putative Notch ligand involved in the mediation of Notch signaling. May have a role in neurogenesis in the peripheral nervous system, limb development and in the adult brain. The chain is Protein jagged-2 (Jag2) from Rattus norvegicus (Rat).